An 89-amino-acid chain; its full sequence is Small ribosomal subunit protein uS15 (89 aa).

The segment covering 1-18 has biased composition (basic and acidic residues); that stretch reads MSLDTAEKQKLIENHQVH. Residues 1 to 23 are disordered; the sequence is MSLDTAEKQKLIENHQVHPTDTG.

The protein belongs to the universal ribosomal protein uS15 family. Part of the 30S ribosomal subunit. Forms a bridge to the 50S subunit in the 70S ribosome, contacting the 23S rRNA.

In terms of biological role, one of the primary rRNA binding proteins, it binds directly to 16S rRNA where it helps nucleate assembly of the platform of the 30S subunit by binding and bridging several RNA helices of the 16S rRNA. Forms an intersubunit bridge (bridge B4) with the 23S rRNA of the 50S subunit in the ribosome. The polypeptide is Small ribosomal subunit protein uS15 (Prochlorococcus marinus (strain MIT 9301)).